A 198-amino-acid chain; its full sequence is tRNA (pseudouridine(54)-N(1))-methyltransferase (198 aa).

S-adenosyl-L-methionine contacts are provided by residues Leu130, Gly153, 176–181, and Cys186; that span reads LSPLEL.

The protein belongs to the methyltransferase superfamily. TrmY family. Homodimer.

The protein resides in the cytoplasm. The catalysed reaction is pseudouridine(54) in tRNA + S-adenosyl-L-methionine = N(1)-methylpseudouridine(54) in tRNA + S-adenosyl-L-homocysteine + H(+). Its function is as follows. Specifically catalyzes the N1-methylation of pseudouridine at position 54 (Psi54) in tRNAs. The protein is tRNA (pseudouridine(54)-N(1))-methyltransferase of Methanococcus vannielii (strain ATCC 35089 / DSM 1224 / JCM 13029 / OCM 148 / SB).